A 348-amino-acid polypeptide reads, in one-letter code: Erythronate-4-phosphate dehydrogenase (348 aa).

Positions 46 and 67 each coordinate substrate. Asp-147 contacts NAD(+). Arg-209 is a catalytic residue. Asp-233 is a binding site for NAD(+). The active site involves Glu-238. The active-site Proton donor is His-255. Gly-258 is a binding site for NAD(+). Residue Tyr-259 participates in substrate binding.

Belongs to the D-isomer specific 2-hydroxyacid dehydrogenase family. PdxB subfamily. In terms of assembly, homodimer.

It localises to the cytoplasm. It carries out the reaction 4-phospho-D-erythronate + NAD(+) = (R)-3-hydroxy-2-oxo-4-phosphooxybutanoate + NADH + H(+). It functions in the pathway cofactor biosynthesis; pyridoxine 5'-phosphate biosynthesis; pyridoxine 5'-phosphate from D-erythrose 4-phosphate: step 2/5. In terms of biological role, catalyzes the oxidation of erythronate-4-phosphate to 3-hydroxy-2-oxo-4-phosphonooxybutanoate. This Bacteroides thetaiotaomicron (strain ATCC 29148 / DSM 2079 / JCM 5827 / CCUG 10774 / NCTC 10582 / VPI-5482 / E50) protein is Erythronate-4-phosphate dehydrogenase.